Consider the following 249-residue polypeptide: Type III pantothenate kinase (249 aa).

6–13 (DAGNSRIK) contacts ATP. Substrate contacts are provided by residues F77 and 98–101 (GVDR). D100 acts as the Proton acceptor in catalysis. K(+) is bound at residue D121. S124 contacts ATP. Substrate is bound at residue T177.

It belongs to the type III pantothenate kinase family. As to quaternary structure, homodimer. NH4(+) serves as cofactor. The cofactor is K(+).

The protein resides in the cytoplasm. It catalyses the reaction (R)-pantothenate + ATP = (R)-4'-phosphopantothenate + ADP + H(+). It functions in the pathway cofactor biosynthesis; coenzyme A biosynthesis; CoA from (R)-pantothenate: step 1/5. Functionally, catalyzes the phosphorylation of pantothenate (Pan), the first step in CoA biosynthesis. In Teredinibacter turnerae (strain ATCC 39867 / T7901), this protein is Type III pantothenate kinase.